Here is a 207-residue protein sequence, read N- to C-terminus: Large ribosomal subunit protein uL4 (207 aa).

The interval 56 to 75 (EVSGTTKKPFKQKGTGNARQ) is disordered.

This sequence belongs to the universal ribosomal protein uL4 family. As to quaternary structure, part of the 50S ribosomal subunit.

Functionally, one of the primary rRNA binding proteins, this protein initially binds near the 5'-end of the 23S rRNA. It is important during the early stages of 50S assembly. It makes multiple contacts with different domains of the 23S rRNA in the assembled 50S subunit and ribosome. Forms part of the polypeptide exit tunnel. The polypeptide is Large ribosomal subunit protein uL4 (Rickettsia prowazekii (strain Madrid E)).